The following is a 265-amino-acid chain: Exosome complex component Rrp4 (265 aa).

Residues 65 to 137 (GDNVIGKIVD…EVNNIDLTTK (73 aa)) enclose the S1 motif domain. Residues 147–205 (KGGQIVKITPSRVPRVIGRGGSMINMIKKLTMTRIIVGQNGWIWVNGKNEALEKLAIEA) enclose the KH domain. The span at 241–254 (EIPELEEEPQEETE) shows a compositional bias: acidic residues. Positions 241-265 (EIPELEEEPQEETEVNNNDGETRRT) are disordered.

The protein belongs to the RRP4 family. In terms of assembly, component of the archaeal exosome complex. Forms a trimer of Rrp4 and/or Csl4 subunits. The trimer associates with a hexameric ring-like arrangement composed of 3 Rrp41-Rrp42 heterodimers.

The protein localises to the cytoplasm. Its function is as follows. Non-catalytic component of the exosome, which is a complex involved in RNA degradation. Increases the RNA binding and the efficiency of RNA degradation. Confers strong poly(A) specificity to the exosome. The sequence is that of Exosome complex component Rrp4 from Pyrococcus horikoshii (strain ATCC 700860 / DSM 12428 / JCM 9974 / NBRC 100139 / OT-3).